The following is a 253-amino-acid chain: UPF0280 protein MA_1715 (253 aa).

This sequence belongs to the UPF0280 family.

The polypeptide is UPF0280 protein MA_1715 (Methanosarcina acetivorans (strain ATCC 35395 / DSM 2834 / JCM 12185 / C2A)).